The chain runs to 340 residues: L-threonine 3-dehydrogenase (340 aa).

Cys38 lines the Zn(2+) pocket. Active-site charge relay system residues include Thr40 and His43. Zn(2+) contacts are provided by His63, Glu64, Cys93, Cys96, Cys99, and Cys107. Residues Ile175, Asp195, Arg200, 262-264 (LGI), and 286-287 (IY) contribute to the NAD(+) site.

Belongs to the zinc-containing alcohol dehydrogenase family. In terms of assembly, homotetramer. Zn(2+) is required as a cofactor.

It is found in the cytoplasm. It catalyses the reaction L-threonine + NAD(+) = (2S)-2-amino-3-oxobutanoate + NADH + H(+). It participates in amino-acid degradation; L-threonine degradation via oxydo-reductase pathway; glycine from L-threonine: step 1/2. Catalyzes the NAD(+)-dependent oxidation of L-threonine to 2-amino-3-ketobutyrate. The protein is L-threonine 3-dehydrogenase of Legionella pneumophila (strain Corby).